We begin with the raw amino-acid sequence, 360 residues long: Phospho-N-acetylmuramoyl-pentapeptide-transferase (360 aa).

Transmembrane regions (helical) follow at residues 16-36 (FAVFQYLTLRGILGVLTALVL), 73-93 (TMGGALILSSIGVSTLLWADL), 97-117 (YVWVVLLVTLLFGAIGWVDDY), 134-154 (YFWQSVFGLGAAIFLYMTAST), 168-188 (YSIPLGAGFIVLTYFVIVGSS), 199-219 (GLAIMPTVMVGGGLGIFCYLS), 236-256 (AGELIVFCGALIGAGLGFLWF), 263-283 (VFMGDVGALALGAALGTIAVI), 288-308 (IVLFIMGGVFVMETLSVVIQV), and 338-358 (VIVRFWIITVILVLIGLATLK).

Belongs to the glycosyltransferase 4 family. MraY subfamily. Requires Mg(2+) as cofactor.

Its subcellular location is the cell inner membrane. The catalysed reaction is UDP-N-acetyl-alpha-D-muramoyl-L-alanyl-gamma-D-glutamyl-meso-2,6-diaminopimeloyl-D-alanyl-D-alanine + di-trans,octa-cis-undecaprenyl phosphate = di-trans,octa-cis-undecaprenyl diphospho-N-acetyl-alpha-D-muramoyl-L-alanyl-D-glutamyl-meso-2,6-diaminopimeloyl-D-alanyl-D-alanine + UMP. Its pathway is cell wall biogenesis; peptidoglycan biosynthesis. Functionally, catalyzes the initial step of the lipid cycle reactions in the biosynthesis of the cell wall peptidoglycan: transfers peptidoglycan precursor phospho-MurNAc-pentapeptide from UDP-MurNAc-pentapeptide onto the lipid carrier undecaprenyl phosphate, yielding undecaprenyl-pyrophosphoryl-MurNAc-pentapeptide, known as lipid I. The sequence is that of Phospho-N-acetylmuramoyl-pentapeptide-transferase from Pseudomonas fluorescens (strain Pf0-1).